Consider the following 188-residue polypeptide: Peptidyl-tRNA hydrolase (188 aa).

Tyrosine 14 contributes to the tRNA binding site. Histidine 19 (proton acceptor) is an active-site residue. TRNA-binding residues include tyrosine 64, asparagine 66, and asparagine 112.

This sequence belongs to the PTH family. As to quaternary structure, monomer.

The protein resides in the cytoplasm. It carries out the reaction an N-acyl-L-alpha-aminoacyl-tRNA + H2O = an N-acyl-L-amino acid + a tRNA + H(+). Hydrolyzes ribosome-free peptidyl-tRNAs (with 1 or more amino acids incorporated), which drop off the ribosome during protein synthesis, or as a result of ribosome stalling. Functionally, catalyzes the release of premature peptidyl moieties from peptidyl-tRNA molecules trapped in stalled 50S ribosomal subunits, and thus maintains levels of free tRNAs and 50S ribosomes. This Clostridium tetani (strain Massachusetts / E88) protein is Peptidyl-tRNA hydrolase.